A 180-amino-acid polypeptide reads, in one-letter code: UPF0227 protein YcfP (180 aa).

The protein belongs to the UPF0227 family.

The sequence is that of UPF0227 protein YcfP from Salmonella arizonae (strain ATCC BAA-731 / CDC346-86 / RSK2980).